Here is a 221-residue protein sequence, read N- to C-terminus: Endo-1,4-beta-xylanase I (221 aa).

The N-terminal stretch at 1–30 is a signal peptide; sequence MVSFTSIITAAVAATGALAAPATDVSLVAR. Residues 31-219 enclose the GH11 domain; that stretch reads QNTPNGEGTH…STGNAQITVN (189 aa). The active-site Nucleophile is E115. The tract at residues 126-157 is disordered; that stretch reads DPSSQSQNKGTVTSDGSSYKIAQSTRTNQPSI. Residue E206 is the Proton donor of the active site.

Belongs to the glycosyl hydrolase 11 (cellulase G) family. The N-terminus is blocked.

It is found in the secreted. The enzyme catalyses Endohydrolysis of (1-&gt;4)-beta-D-xylosidic linkages in xylans.. It participates in glycan degradation; xylan degradation. Major xylan-degrading enzyme. Contributes to the hydrolysis of arabinoxylan, the major component of maize cell-walls. The chain is Endo-1,4-beta-xylanase I (XYL1) from Cochliobolus carbonum (Maize leaf spot fungus).